A 542-amino-acid polypeptide reads, in one-letter code: Chaperonin GroEL 2 (542 aa).

Residues 30–33, Lys-51, 87–91, Gly-415, and Asp-496 each bind ATP; these read TLGP and DGTTT.

This sequence belongs to the chaperonin (HSP60) family. Forms a cylinder of 14 subunits composed of two heptameric rings stacked back-to-back. Interacts with the co-chaperonin GroES.

The protein resides in the cytoplasm. The catalysed reaction is ATP + H2O + a folded polypeptide = ADP + phosphate + an unfolded polypeptide.. Functionally, together with its co-chaperonin GroES, plays an essential role in assisting protein folding. The GroEL-GroES system forms a nano-cage that allows encapsulation of the non-native substrate proteins and provides a physical environment optimized to promote and accelerate protein folding. The chain is Chaperonin GroEL 2 from Cereibacter sphaeroides (strain ATCC 17023 / DSM 158 / JCM 6121 / CCUG 31486 / LMG 2827 / NBRC 12203 / NCIMB 8253 / ATH 2.4.1.) (Rhodobacter sphaeroides).